A 383-amino-acid polypeptide reads, in one-letter code: L-lactate dehydrogenase (383 aa).

The FMN hydroxy acid dehydrogenase domain maps to methionine 1–alanine 380. Tyrosine 24 contacts substrate. Positions 106 and 127 each coordinate FMN. Tyrosine 129 is a substrate binding site. Threonine 155 lines the FMN pocket. Residue arginine 164 coordinates substrate. Residue lysine 251 coordinates FMN. The active-site Proton acceptor is the histidine 275. Arginine 278 provides a ligand contact to substrate. Aspartate 306–arginine 330 contacts FMN.

Belongs to the FMN-dependent alpha-hydroxy acid dehydrogenase family. The cofactor is FMN.

The protein resides in the cell inner membrane. It catalyses the reaction (S)-lactate + A = pyruvate + AH2. Catalyzes the conversion of L-lactate to pyruvate. Is coupled to the respiratory chain. In Bartonella quintana (strain Toulouse) (Rochalimaea quintana), this protein is L-lactate dehydrogenase.